Reading from the N-terminus, the 198-residue chain is Nucleoid occlusion factor SlmA (198 aa).

Residues 10–70 (NRREEILQSL…SLIEFIEDSL (61 aa)) enclose the HTH tetR-type domain. The H-T-H motif DNA-binding region spans 33–52 (TTAKLAASVGVSEAALYRHF). Positions 117–144 (EQDRLQGRINQLFERIEAQLRQVLREKR) form a coiled coil.

This sequence belongs to the nucleoid occlusion factor SlmA family. Homodimer. Interacts with FtsZ.

The protein resides in the cytoplasm. It is found in the nucleoid. In terms of biological role, required for nucleoid occlusion (NO) phenomenon, which prevents Z-ring formation and cell division over the nucleoid. Acts as a DNA-associated cell division inhibitor that binds simultaneously chromosomal DNA and FtsZ, and disrupts the assembly of FtsZ polymers. SlmA-DNA-binding sequences (SBS) are dispersed on non-Ter regions of the chromosome, preventing FtsZ polymerization at these regions. The polypeptide is Nucleoid occlusion factor SlmA (Escherichia coli O45:K1 (strain S88 / ExPEC)).